The chain runs to 40 residues: ANTAFVSSAHNTQKIPAGAPFNRNLRAMLADLRQNAAFAG.

Positions 3–40 (TAFVSSAHNTQKIPAGAPFNRNLRAMLADLRQNAAFAG) constitute a Gnk2-homologous domain. Alpha-D-mannopyranose is bound at residue Asn11.

In terms of tissue distribution, expressed in seeds (at the protein level).

Its function is as follows. Possesses antifungal activity against B.cinerea, M.arachidicola, F.oxysporum, R.solani and C.comatus and moderate antibacterial activity against S.aureus, P.aeruginosa and E.coli. Inhibits HIV-1 reverse transcriptase and proliferation of murine splenocytes. Exerts antifungal activity through its carbohydrate-binding specificity. This chain is Antifungal protein ginkbilobin-1, found in Ginkgo biloba (Ginkgo).